A 285-amino-acid chain; its full sequence is Pantothenate synthetase (285 aa).

Residue 30 to 37 participates in ATP binding; sequence MGYLHAGH. His-37 (proton donor) is an active-site residue. Gln-61 is a binding site for (R)-pantoate. Residue Gln-61 participates in beta-alanine binding. Residue 147–150 participates in ATP binding; that stretch reads GQKD. Residue Gln-153 coordinates (R)-pantoate. ATP is bound by residues Val-176 and 184-187; that span reads LSSR.

Belongs to the pantothenate synthetase family. As to quaternary structure, homodimer.

The protein localises to the cytoplasm. The catalysed reaction is (R)-pantoate + beta-alanine + ATP = (R)-pantothenate + AMP + diphosphate + H(+). It functions in the pathway cofactor biosynthesis; (R)-pantothenate biosynthesis; (R)-pantothenate from (R)-pantoate and beta-alanine: step 1/1. Catalyzes the condensation of pantoate with beta-alanine in an ATP-dependent reaction via a pantoyl-adenylate intermediate. In Solidesulfovibrio magneticus (strain ATCC 700980 / DSM 13731 / RS-1) (Desulfovibrio magneticus), this protein is Pantothenate synthetase.